The sequence spans 198 residues: Neutrophil gelatinase-associated lipocalin (198 aa).

The N-terminal stretch at 1 to 20 (MGLGVLCLALVLLGVLQSQA) is a signal peptide. A Pyrrolidone carboxylic acid modification is found at Gln21. 72 to 74 (YST) is a binding site for a carboxymycobactin. N-linked (GlcNAc...) asparagine glycosylation occurs at Asn85. A disulfide bond links Cys96 and Cys195. Residue Tyr126 participates in enterobactin binding. A carboxymycobactin-binding residues include Lys145, Lys154, and Tyr158. Residue Lys154 participates in enterobactin binding.

This sequence belongs to the calycin superfamily. Lipocalin family. Monomer. Homodimer; disulfide-linked. Heterodimer; disulfide-linked with MMP9. As to expression, detected in the ureteric bud in embryonic kidney (at protein level).

It is found in the secreted. Its subcellular location is the cytoplasmic granule lumen. The protein localises to the cytoplasmic vesicle lumen. In terms of biological role, iron-trafficking protein involved in multiple processes such as apoptosis, innate immunity and renal development. Binds iron through association with 2,3-dihydroxybenzoic acid (2,3-DHBA), a siderophore that shares structural similarities with bacterial enterobactin, and delivers or removes iron from the cell, depending on the context. Iron-bound form (holo-24p3) is internalized following binding to the SLC22A17 (24p3R) receptor, leading to release of iron and subsequent increase of intracellular iron concentration. In contrast, association of the iron-free form (apo-24p3) with the SLC22A17 (24p3R) receptor is followed by association with an intracellular siderophore, iron chelation and iron transfer to the extracellular medium, thereby reducing intracellular iron concentration. Involved in apoptosis due to interleukin-3 (IL3) deprivation: iron-loaded form increases intracellular iron concentration without promoting apoptosis, while iron-free form decreases intracellular iron levels, inducing expression of the proapoptotic protein BCL2L11/BIM, resulting in apoptosis. Involved in innate immunity; limits bacterial proliferation by sequestering iron bound to microbial siderophores, such as enterobactin. Can also bind siderophores from M.tuberculosis. This is Neutrophil gelatinase-associated lipocalin (Lcn2) from Rattus norvegicus (Rat).